A 240-amino-acid chain; its full sequence is Cytochrome c-551 (240 aa).

Heme c contacts are provided by C41, C44, H45, C128, C132, and H133.

Post-translationally, binds 2 heme c groups per subunit.

This is Cytochrome c-551 from Rhodocyclus tenuis (Rhodospirillum tenue).